Consider the following 387-residue polypeptide: Paralemmin-1 (387 aa).

Met-1 carries the post-translational modification N-acetylmethionine. The stretch at 9–101 (TSQQERLQAI…EKEIEVLERG (93 aa)) forms a coiled coil. Composition is skewed to basic and acidic residues over residues 31–41 (KRRQLEDERRQ) and 69–102 (DLRR…ERGD). The segment at 31–160 (KRRQLEDERR…VSNTPLRTVD (130 aa)) is disordered. Residues 104–117 (APATAKENAAAPSP) show a composition bias toward low complexity. Phosphoserine is present on residues Ser-116 and Ser-124. Phosphothreonine occurs at positions 141 and 145. Ser-162 carries the post-translational modification Phosphoserine. Phosphothreonine is present on Thr-243. Phosphoserine is present on Ser-245. Disordered stretches follow at residues 247–296 (AGST…GQEP) and 335–378 (AEPK…DMKK). The segment covering 286-296 (GPPGIQPGQEP) has biased composition (low complexity). Ser-346 is subject to Phosphoserine. Phosphothreonine is present on Thr-367. The residue at position 369 (Ser-369) is a Phosphoserine. S-palmitoyl cysteine attachment occurs at residues Cys-381 and Cys-383. A Cysteine methyl ester modification is found at Cys-384. A lipid anchor (S-farnesyl cysteine) is attached at Cys-384. Residues 385-387 (SIM) constitute a propeptide, removed in mature form.

Belongs to the paralemmin family. In terms of assembly, interacts with dopamine receptor DRD3. In terms of tissue distribution, widely expressed with highest expression in brain and testis and intermediate expression in heart and adrenal gland.

It localises to the cell membrane. The protein resides in the cell projection. It is found in the filopodium membrane. Its subcellular location is the axon. The protein localises to the dendrite. It localises to the dendritic spine. The protein resides in the basolateral cell membrane. It is found in the apicolateral cell membrane. Involved in plasma membrane dynamics and cell process formation. Isoform 1 and isoform 2 are necessary for axonal and dendritic filopodia induction, for dendritic spine maturation and synapse formation in a palmitoylation-dependent manner. This is Paralemmin-1 (PALM) from Homo sapiens (Human).